Reading from the N-terminus, the 396-residue chain is NADH-quinone oxidoreductase subunit D (396 aa).

The protein belongs to the complex I 49 kDa subunit family. NDH-1 is composed of 14 different subunits. Subunits NuoB, C, D, E, F, and G constitute the peripheral sector of the complex.

Its subcellular location is the cell inner membrane. The enzyme catalyses a quinone + NADH + 5 H(+)(in) = a quinol + NAD(+) + 4 H(+)(out). Its function is as follows. NDH-1 shuttles electrons from NADH, via FMN and iron-sulfur (Fe-S) centers, to quinones in the respiratory chain. The immediate electron acceptor for the enzyme in this species is believed to be ubiquinone. Couples the redox reaction to proton translocation (for every two electrons transferred, four hydrogen ions are translocated across the cytoplasmic membrane), and thus conserves the redox energy in a proton gradient. The protein is NADH-quinone oxidoreductase subunit D of Brucella abortus (strain S19).